The following is a 185-amino-acid chain: MTKDVINNMSTHMDKTIDALRKEYQRVRTGRASTGLLDEIKVDFYGTPSPINQVATLAVPEPRTITLQPWDAKMIPVIEKAIMNANLGLTPANDGKVIRLNIPPLTEERRKDIVKQLKKLAEDAKVAVRNIRRDAIDELKKQEKDKKISEDDLKRAEKEVQDVTNSHVAKIDEVFVHKEKEVMEV.

The tract at residues 141–161 (KQEKDKKISEDDLKRAEKEVQ) is disordered.

Belongs to the RRF family.

It localises to the cytoplasm. Its function is as follows. Responsible for the release of ribosomes from messenger RNA at the termination of protein biosynthesis. May increase the efficiency of translation by recycling ribosomes from one round of translation to another. The chain is Ribosome-recycling factor from Geotalea uraniireducens (strain Rf4) (Geobacter uraniireducens).